Reading from the N-terminus, the 129-residue chain is HTH-type transcriptional regulator GlnR (129 aa).

The HTH merR-type domain maps to 10 to 78 (LFPIGIVMDL…MAGIKQVLLM (69 aa)). Residues 13 to 32 (IGIVMDLTQLSARQIRYYEE) constitute a DNA-binding region (H-T-H motif).

As to quaternary structure, homodimer under conditions of nitrogen excess. Monomer under conditions of nitrogen-limited. Interacts with feedback-inhibited GlnA in order to stabilizes GlnR-DNA complex.

Under conditions of nitrogen excess, the DNA binding activity of GlnR is activated by a transient interaction with feedback-inhibited GlnA. Under conditions of nitrogen-limited, GlnR is autoinhibited by its C-terminal region. Functionally, transcription repressor during nitrogen excess. On the contrary of the MerR members, which require longer DNA sites for high-affinity binding, GlnR requires a DNA sequence of 17 nucleotides as minimal binding site. This chain is HTH-type transcriptional regulator GlnR, found in Bacillus anthracis.